Reading from the N-terminus, the 130-residue chain is Large ribosomal subunit protein bL12 (130 aa).

The protein belongs to the bacterial ribosomal protein bL12 family. As to quaternary structure, homodimer. Part of the ribosomal stalk of the 50S ribosomal subunit. Forms a multimeric L10(L12)X complex, where L10 forms an elongated spine to which 2 to 4 L12 dimers bind in a sequential fashion. Binds GTP-bound translation factors.

Functionally, forms part of the ribosomal stalk which helps the ribosome interact with GTP-bound translation factors. Is thus essential for accurate translation. The polypeptide is Large ribosomal subunit protein bL12 (Chlamydia muridarum (strain MoPn / Nigg)).